A 517-amino-acid polypeptide reads, in one-letter code: ATP synthase subunit beta (517 aa).

ATP is bound at residue 167–174 (GGAGVGKT). Composition is skewed to basic and acidic residues over residues 475–484 (AESMGAKMDD) and 495–508 (DSKDKGKGDSKADD). The disordered stretch occupies residues 475–517 (AESMGAKMDDGGSDGAPPPSDSKDKGKGDSKADDKGDDADKDA).

It belongs to the ATPase alpha/beta chains family. As to quaternary structure, F-type ATPases have 2 components, CF(1) - the catalytic core - and CF(0) - the membrane proton channel. CF(1) has five subunits: alpha(3), beta(3), gamma(1), delta(1), epsilon(1). CF(0) has three main subunits: a(1), b(2) and c(9-12). The alpha and beta chains form an alternating ring which encloses part of the gamma chain. CF(1) is attached to CF(0) by a central stalk formed by the gamma and epsilon chains, while a peripheral stalk is formed by the delta and b chains.

It is found in the cell membrane. It catalyses the reaction ATP + H2O + 4 H(+)(in) = ADP + phosphate + 5 H(+)(out). Produces ATP from ADP in the presence of a proton gradient across the membrane. The catalytic sites are hosted primarily by the beta subunits. This is ATP synthase subunit beta from Mycobacterium sp. (strain JLS).